A 404-amino-acid polypeptide reads, in one-letter code: uncharacterized protein (404 aa).

Transmembrane regions (helical) follow at residues Ile-35–Leu-55 and Glu-92–Ile-112.

It is found in the membrane. This is an uncharacterized protein from Saccharomyces cerevisiae (strain ATCC 204508 / S288c) (Baker's yeast).